The chain runs to 613 residues: AP-5 complex subunit mu (613 aa).

The region spanning 309–563 (KQRLLFTIHE…DYAKVSFKIV (255 aa)) is the MHD domain. A disordered region spans residues 501-522 (SPLQSRRKGDGDDEESEDESAE). Positions 511-521 (GDDEESEDESA) are enriched in acidic residues.

It belongs to the adaptor complexes medium subunit family. Probably part of the adaptor protein complex 5 (AP-5).

The protein localises to the cytoplasmic vesicle membrane. This chain is AP-5 complex subunit mu (AP5M), found in Arabidopsis thaliana (Mouse-ear cress).